The primary structure comprises 537 residues: Intercellular adhesion molecule 1 (537 aa).

The first 27 residues, 1–27 (MASTRAKPTLPLLLALVTVVIPGPGDA), serve as a signal peptide directing secretion. At 28 to 485 (QVSIHPREAF…LTVLYHSQNN (458 aa)) the chain is on the extracellular side. Ig-like C2-type domains are found at residues 41-102 (GGSV…QSSA) and 127-195 (GKDL…LDLR). Asparagine 47 is a glycosylation site (N-linked (GlcNAc...) asparagine). 3 cysteine pairs are disulfide-bonded: cysteine 48-cysteine 91, cysteine 52-cysteine 95, and cysteine 134-cysteine 188. A Cell attachment site; atypical motif is present at residues 151–153 (RGE). The Cell attachment site motif lies at 179–181 (RGD). N-linked (GlcNAc...) asparagine glycans are attached at residues asparagine 185, asparagine 204, asparagine 267, asparagine 311, asparagine 362, asparagine 388, asparagine 409, asparagine 456, and asparagine 469. One can recognise an Ig-like C2-type 3 domain in the interval 232–299 (GTQQKLFCSL…LRCVLELADQ (68 aa)). The cysteines at positions 239 and 292 are disulfide-linked. One can recognise an Ig-like C2-type 4 domain in the interval 327-381 (GSQVTVKCEAHSGSKVVLLSGVEPRPPTPQVQFTLNASSEDHKRSFFCSAALEVA). Residues cysteine 334 and cysteine 374 are joined by a disulfide bond. 3 disulfide bridges follow: cysteine 406-cysteine 422, cysteine 422-cysteine 461, and cysteine 434-cysteine 461. Residues 415–468 (GSQQTLKCQAWGNPSPKMTCRRKADGALLPIGVVKSVKQEMNGTYVCHAFSSHG) form the Ig-like C2-type 5 domain. Residues 486 to 509 (WTIIILVPVLLVIVGLVMAASYVY) form a helical membrane-spanning segment. Residues 510 to 537 (NRQRKIRIYKLQKAQEEAIKLKGQAPPP) are Cytoplasmic-facing.

Belongs to the immunoglobulin superfamily. ICAM family. As to quaternary structure, homodimer. Interacts with MUC1 and promotes cell aggregation in epithelial cells. Interacts with ARHGEF26/SGEF. Interacts (on T cell side) with CD81, CD247 and CD9 at immunological synapses between antigen-presenting cells and T cells. Monoubiquitinated, which is promoted by MARCH9 and leads to endocytosis. As to expression, expressed at low level on a subpopulation of lymphocytes, macrophages, and endothelial cells, but is strongly induced on these cells, and on fibroblasts and epithelial cells.

It localises to the membrane. ICAM proteins are ligands for the leukocyte adhesion protein LFA-1 (integrin alpha-L/beta-2). During leukocyte trans-endothelial migration, ICAM1 engagement promotes the assembly of endothelial apical cups through ARHGEF26/SGEF and RHOG activation. The protein is Intercellular adhesion molecule 1 (Icam1) of Mus musculus (Mouse).